Reading from the N-terminus, the 313-residue chain is MMENFKHTTVLLDEAVNGLNIRPDGIYIDGTFGRGGHSRLILSQLGEEGRLLAIDRDPQAIAVAQAINDPRFSIIHGPFSALADYVAERELTGKIDGILLDLGVSSPQLDDAERGFSFMRDGPLDMRMDPTRGQSAAEWLQTAEEADIAWVLKTFGEERFAKRIARAIVERNREQPMTRTKELAEVVAAATPVKDKFKHPATRTFQAVRIWVNSELEEIEQALKSSLSVLAPGGRLSIISFHSLEDRIVKRFMREQSRGPQVPAGLPMTEAQLKKLGGRELRVLGKLMPGEKEVAENPRARSSVLRIAERTNA.

Residues 35 to 37, Asp-55, Phe-79, Asp-101, and Gln-108 contribute to the S-adenosyl-L-methionine site; that span reads GGH.

The protein belongs to the methyltransferase superfamily. RsmH family.

The protein resides in the cytoplasm. It carries out the reaction cytidine(1402) in 16S rRNA + S-adenosyl-L-methionine = N(4)-methylcytidine(1402) in 16S rRNA + S-adenosyl-L-homocysteine + H(+). Specifically methylates the N4 position of cytidine in position 1402 (C1402) of 16S rRNA. In Salmonella arizonae (strain ATCC BAA-731 / CDC346-86 / RSK2980), this protein is Ribosomal RNA small subunit methyltransferase H.